The chain runs to 295 residues: 4-diphosphocytidyl-2-C-methyl-D-erythritol kinase (295 aa).

Lys-18 is an active-site residue. Position 101-111 (101-111 (PMGGGIGGGSS)) interacts with ATP. Asp-143 is an active-site residue.

Belongs to the GHMP kinase family. IspE subfamily.

It carries out the reaction 4-CDP-2-C-methyl-D-erythritol + ATP = 4-CDP-2-C-methyl-D-erythritol 2-phosphate + ADP + H(+). The protein operates within isoprenoid biosynthesis; isopentenyl diphosphate biosynthesis via DXP pathway; isopentenyl diphosphate from 1-deoxy-D-xylulose 5-phosphate: step 3/6. Functionally, catalyzes the phosphorylation of the position 2 hydroxy group of 4-diphosphocytidyl-2C-methyl-D-erythritol. The protein is 4-diphosphocytidyl-2-C-methyl-D-erythritol kinase of Vibrio cholerae serotype O1 (strain ATCC 39315 / El Tor Inaba N16961).